Reading from the N-terminus, the 402-residue chain is Protein indeterminate-domain 12 (402 aa).

Positions 47-66 (TETHKPKKKRGLPGNPDPDA) are disordered. Ser72 is subject to Phosphoserine. 2 C2H2-type zinc fingers span residues 82 to 104 (FVCE…RRGH) and 124 to 154 (YVCP…CRKH). The short motif at 146–153 (IKKHFCRK) is the Nuclear localization signal element. The C2H2-type 2; degenerate zinc-finger motif lies at 159–183 (WKCEKCSKFYAVQSDWKAHTKICGT). The Zn(2+) site is built by Cys161, Cys164, His177, Cys181, Cys188, Cys190, His203, and Cys207. A CCHC-type 2; atypical zinc finger spans residues 186–209 (YRCDCGTLFSRKDTFITHRAFCDA). Residues 196-208 (RKDTFITHRAFCD) are SHR-binding.

It localises to the nucleus. Functionally, probable transcription factor. This is Protein indeterminate-domain 12 from Arabidopsis thaliana (Mouse-ear cress).